We begin with the raw amino-acid sequence, 261 residues long: Auxin-responsive protein IAA10 (261 aa).

Residues 1-43 (MNGLQEVCSSSGSVMIGLPAEEDENAAHSSEDSSCPDESVSET) are disordered. The short motif at 45–49 (LDLAL) is the EAR-like (transcriptional repression) element. Residues 62-90 (LSSSSSSLTRESGTKRSADSSPAAASNAT) form a disordered region. Residues 80-89 (DSSPAAASNA) are compositionally biased toward low complexity. Residues 151–253 (SMLVKVTMDG…SVTRLRIMKT (103 aa)) enclose the PB1 domain.

The protein belongs to the Aux/IAA family. In terms of assembly, homodimers and heterodimers. Preferentially expressed in vegetative organs.

The protein localises to the nucleus. In terms of biological role, aux/IAA proteins are short-lived transcriptional factors that function as repressors of early auxin response genes at low auxin concentrations. Repression is thought to result from the interaction with auxin response factors (ARFs), proteins that bind to the auxin-responsive promoter element (AuxRE). Formation of heterodimers with ARF proteins may alter their ability to modulate early auxin response genes expression. This Arabidopsis thaliana (Mouse-ear cress) protein is Auxin-responsive protein IAA10 (IAA10).